The following is a 147-amino-acid chain: UPF0208 membrane protein PM0703 (147 aa).

Transmembrane regions (helical) follow at residues 32-52 (VIKA…FAIT) and 65-85 (LAIA…GLYW).

This sequence belongs to the UPF0208 family.

It localises to the cell inner membrane. The sequence is that of UPF0208 membrane protein PM0703 from Pasteurella multocida (strain Pm70).